The primary structure comprises 300 residues: 4-hydroxy-tetrahydrodipicolinate synthase (300 aa).

Thr45 contributes to the pyruvate binding site. The active-site Proton donor/acceptor is the Tyr140. Lys169 serves as the catalytic Schiff-base intermediate with substrate. Ile210 lines the pyruvate pocket.

Belongs to the DapA family. Homotetramer; dimer of dimers.

It localises to the cytoplasm. The enzyme catalyses L-aspartate 4-semialdehyde + pyruvate = (2S,4S)-4-hydroxy-2,3,4,5-tetrahydrodipicolinate + H2O + H(+). It participates in amino-acid biosynthesis; L-lysine biosynthesis via DAP pathway; (S)-tetrahydrodipicolinate from L-aspartate: step 3/4. Its function is as follows. Catalyzes the condensation of (S)-aspartate-beta-semialdehyde [(S)-ASA] and pyruvate to 4-hydroxy-tetrahydrodipicolinate (HTPA). The chain is 4-hydroxy-tetrahydrodipicolinate synthase from Helicobacter pylori (strain P12).